Reading from the N-terminus, the 932-residue chain is Beta-mannosidase A (932 aa).

The signal sequence occupies residues 1-19 (MRVPAQATIAVLASAVSSP). 9 N-linked (GlcNAc...) asparagine glycosylation sites follow: Asn41, Asn81, Asn94, Asn249, Asn261, Asn284, Asn289, Asn318, and Asn348. The active-site Proton donor is Glu480. N-linked (GlcNAc...) asparagine glycans are attached at residues Asn538, Asn551, Asn609, Asn624, Asn632, Asn659, Asn739, and Asn791.

It belongs to the glycosyl hydrolase 2 family. Beta-mannosidase A subfamily. As to quaternary structure, homodimer.

Its subcellular location is the secreted. It catalyses the reaction Hydrolysis of terminal, non-reducing beta-D-mannose residues in beta-D-mannosides.. The protein operates within glycan metabolism; N-glycan degradation. Exoglycosidase that cleaves the single beta-linked mannose residue from the non-reducing end of beta-mannosidic oligosaccharides of various complexity and length. Involved in the degradation of polymeric mannan and galactomannan. This chain is Beta-mannosidase A (mndA), found in Aspergillus terreus (strain NIH 2624 / FGSC A1156).